We begin with the raw amino-acid sequence, 194 residues long: Orotate phosphoribosyltransferase (194 aa).

114 to 122 (EDVVTTGKS) serves as a coordination point for 5-phospho-alpha-D-ribose 1-diphosphate. Orotate contacts are provided by threonine 118 and arginine 146.

This sequence belongs to the purine/pyrimidine phosphoribosyltransferase family. PyrE subfamily. Homodimer. The cofactor is Mg(2+).

The enzyme catalyses orotidine 5'-phosphate + diphosphate = orotate + 5-phospho-alpha-D-ribose 1-diphosphate. The protein operates within pyrimidine metabolism; UMP biosynthesis via de novo pathway; UMP from orotate: step 1/2. Its function is as follows. Catalyzes the transfer of a ribosyl phosphate group from 5-phosphoribose 1-diphosphate to orotate, leading to the formation of orotidine monophosphate (OMP). The polypeptide is Orotate phosphoribosyltransferase (Clostridioides difficile (strain 630) (Peptoclostridium difficile)).